The primary structure comprises 201 residues: Thymidylate kinase (201 aa).

7-14 contacts ATP; it reads GGEGSGKT.

It belongs to the thymidylate kinase family.

The catalysed reaction is dTMP + ATP = dTDP + ADP. In terms of biological role, phosphorylation of dTMP to form dTDP in both de novo and salvage pathways of dTTP synthesis. This Acholeplasma laidlawii (strain PG-8A) protein is Thymidylate kinase.